Here is a 688-residue protein sequence, read N- to C-terminus: Ethylmalonyl-CoA mutase (688 aa).

The B12-binding domain maps to 530–659 (TPRLVVGKPG…VGLAKVVERA (130 aa)). H543 provides a ligand contact to adenosylcob(III)alamin. Positions 666-688 (DRADTEAGVPGAPKRNESGAQVF) are disordered.

This sequence belongs to the methylmalonyl-CoA mutase family. The cofactor is adenosylcob(III)alamin.

It carries out the reaction (2R)-ethylmalonyl-CoA = (2S)-methylsuccinyl-CoA. Functionally, radical enzyme that catalyzes the transformation of (2R)-ethylmalonyl-CoA to (2S)-methylsuccinyl-CoA. Is involved in the ethylmalonyl-CoA pathway for acetyl-CoA assimilation required for M.extorquens growth on one- and two-carbon compounds such as ethylamine, methanol or ethanol as sole carbon source. This enzyme acts as a regulatory metabolic control point in this pathway, that allows M.extorquens to efficiently restore metabolic balance when challenged with a sudden change in the growth substrate. This is Ethylmalonyl-CoA mutase from Methylorubrum extorquens (strain ATCC 14718 / DSM 1338 / JCM 2805 / NCIMB 9133 / AM1) (Methylobacterium extorquens).